We begin with the raw amino-acid sequence, 656 residues long: PAN2-PAN3 deadenylation complex subunit pan3 (656 aa).

Disordered stretches follow at residues 1 to 24 and 75 to 117; these read MAAT…KNRD and SFTP…QQAN. The C3H1-type zinc-finger motif lies at 24–53; that stretch reads DTKETLCRNVVIYGHCRWEDSGCTFNHDQN. A PABPC-interacting motif-2 (PAM-2) motif is present at residues 63-83; the sequence is NSNRRVFNVESPSFTPANQQQ. 2 stretches are compositionally biased toward polar residues: residues 75 to 96 and 107 to 117; these read SFTP…SQAA and GTSTPTLQQAN. The segment at 251-514 is pseudokinase domain; sequence QLLPNSGLPN…TVETLLGGIT (264 aa). ATP-binding positions include 275–280, arginine 302, 352–359, and 412–413; these read TRNSTC, DFHPLSET, and SK. Residues 515 to 553 are a coiled coil; sequence THLANFANFVMQESDEKEFHLMRELENGRIARLMFKLSV. Positions 554–656 are knob domain; sequence VNERGDSCGV…SKPSATGATI (103 aa).

The protein belongs to the protein kinase superfamily. PAN3 family. In terms of assembly, homodimer. Forms a heterotrimer with a catalytic subunit par-1/pan2 to form the poly(A)-nuclease (PAN) deadenylation complex. Interacts (via PAM-2 motif) with poly(A)-binding protein pabp-1 (via PABC domain), conferring substrate specificity of the enzyme complex.

It localises to the cytoplasm. In terms of biological role, regulatory subunit of the poly(A)-nuclease (PAN) deadenylation complex, one of two cytoplasmic mRNA deadenylases involved in mRNA turnover. PAN specifically shortens poly(A) tails of RNA and the activity is stimulated by poly(A)-binding protein pabp-1. PAN deadenylation is followed by rapid degradation of the shortened mRNA tails by the CCR4-NOT complex. Deadenylated mRNAs are then degraded by two alternative mechanisms, namely exosome-mediated 3'-5' exonucleolytic degradation, or deadenylation-dependent mRNA decaping and subsequent 5'-3' exonucleolytic degradation by rgb-30/xrn1. May also be involved in post-transcriptional maturation of mRNA poly(A) tails. par-2/pan3 acts as a positive regulator for PAN activity, recruiting the catalytic subunit par-1/pan2 to mRNA via its interaction with RNA and with pabp-1. This Neurospora crassa (strain ATCC 24698 / 74-OR23-1A / CBS 708.71 / DSM 1257 / FGSC 987) protein is PAN2-PAN3 deadenylation complex subunit pan3 (par-2).